Consider the following 872-residue polypeptide: Alanine--tRNA ligase (872 aa).

Residues histidine 567, histidine 571, cysteine 669, and histidine 673 each coordinate Zn(2+).

This sequence belongs to the class-II aminoacyl-tRNA synthetase family. The cofactor is Zn(2+).

The protein resides in the cytoplasm. The catalysed reaction is tRNA(Ala) + L-alanine + ATP = L-alanyl-tRNA(Ala) + AMP + diphosphate. Catalyzes the attachment of alanine to tRNA(Ala) in a two-step reaction: alanine is first activated by ATP to form Ala-AMP and then transferred to the acceptor end of tRNA(Ala). Also edits incorrectly charged Ser-tRNA(Ala) and Gly-tRNA(Ala) via its editing domain. The sequence is that of Alanine--tRNA ligase from Streptococcus agalactiae serotype V (strain ATCC BAA-611 / 2603 V/R).